A 255-amino-acid chain; its full sequence is Syntaxin-23 (255 aa).

The tract at residues methionine 1–glutamine 31 is disordered. Position 2 is an N-acetylserine (serine 2). Over residues leucine 14 to glutamine 31 the composition is skewed to polar residues. A t-SNARE coiled-coil homology domain is found at glutamate 184–histidine 246.

The protein belongs to the syntaxin family. In terms of assembly, part of the t-SNARE complex. Interacts with RGS1. As to expression, expressed at higher levels in leaves, flowers and stems than in roots.

The protein localises to the membrane. Its function is as follows. May function in the docking or fusion of transport vesicles with the prevacuolar membrane. This chain is Syntaxin-23 (SYP23), found in Arabidopsis thaliana (Mouse-ear cress).